The chain runs to 196 residues: Calmodulin-like protein 4 (196 aa).

The tract at residues 1–43 (MAAEHLLPGPPPSLADFRLEAGGKGTERGSGSSKPTGSSRGPR) is disordered. Basic and acidic residues predominate over residues 17–27 (FRLEAGGKGTE). Residues 29 to 39 (GSGSSKPTGSS) are compositionally biased toward polar residues. 4 consecutive EF-hand domains span residues 51-86 (DQINEYKECFSLYDKQQRGKIKATDLMVAMRCLGAS), 87-122 (PTPGEVQRHLQTHGIDGNGELDFSTFLTIMHMQIKQ), 124-159 (DPKKEILLAMLMVDKEKKGYVMASDLRSKLTSLGEK), and 160-195 (LTHKEVDDLFREADIEPNGKVKYDEFIHKITLPGRD).

Belongs to the calmodulin family. In terms of assembly, interacts with MYO7B; the interaction mediates the association of CALML4 with the IMAC/intermicrovillar adhesion complex. Interacts with MYO7A. In terms of tissue distribution, expressed in the intestinal tract. Dominant transcript in the intestinal tract.

It is found in the cell projection. It localises to the microvillus. As part of the intermicrovillar adhesion complex/IMAC plays a role in epithelial brush border differentiation, controlling microvilli organization and length. Acts as a light chain for MYO7B and is required for efficient targeting of the IMAC to the tips of border brush microvilli. The chain is Calmodulin-like protein 4 from Homo sapiens (Human).